A 60-amino-acid polypeptide reads, in one-letter code: UPF0337 protein SSP1134 (60 aa).

A disordered region spans residues M1 to K41. A compositionally biased stretch (basic and acidic residues) spans D23–K41.

It belongs to the UPF0337 (CsbD) family.

The chain is UPF0337 protein SSP1134 from Staphylococcus saprophyticus subsp. saprophyticus (strain ATCC 15305 / DSM 20229 / NCIMB 8711 / NCTC 7292 / S-41).